A 1385-amino-acid polypeptide reads, in one-letter code: DNA-directed RNA polymerase subunit beta'' (1385 aa).

4 residues coordinate Zn(2+): C220, C293, C300, and C303.

Belongs to the RNA polymerase beta' chain family. RpoC2 subfamily. In terms of assembly, in plastids the minimal PEP RNA polymerase catalytic core is composed of four subunits: alpha, beta, beta', and beta''. When a (nuclear-encoded) sigma factor is associated with the core the holoenzyme is formed, which can initiate transcription. Zn(2+) serves as cofactor.

The protein localises to the plastid. It localises to the chloroplast. It carries out the reaction RNA(n) + a ribonucleoside 5'-triphosphate = RNA(n+1) + diphosphate. Functionally, DNA-dependent RNA polymerase catalyzes the transcription of DNA into RNA using the four ribonucleoside triphosphates as substrates. The protein is DNA-directed RNA polymerase subunit beta'' of Aethionema cordifolium (Lebanon stonecress).